Here is a 147-residue protein sequence, read N- to C-terminus: Large ribosomal subunit protein bL9 (147 aa).

This sequence belongs to the bacterial ribosomal protein bL9 family.

Binds to the 23S rRNA. The sequence is that of Large ribosomal subunit protein bL9 from Gemmatimonas aurantiaca (strain DSM 14586 / JCM 11422 / NBRC 100505 / T-27).